The chain runs to 248 residues: MEGDCLSCMKYLMFVFNFFIFLGGACLLAIGIWVMVDPTGFREIVAANPLLLTGAYILLAMGGLLFLLGFLGCCGAVRENKCLLLFFFLFILIIFLAELSAAILAFIFRENLTREFFTKELTKHYQGNNDTDVFSATWNSVMITFGCCGVNGPEDFKFASVFRLLTLDSEEVPEACCRREPQSRDGVLLSREECLLGRSLFLNKQGCYTVILNTFETYVYLAGALAIGVLAIELFAMIFAMCLFRGIQ.

Residues 1–13 (MEGDCLSCMKYLM) are Cytoplasmic-facing. A helical transmembrane segment spans residues 14-34 (FVFNFFIFLGGACLLAIGIWV). Topologically, residues 35–49 (MVDPTGFREIVAANP) are extracellular. Residues 50 to 70 (LLLTGAYILLAMGGLLFLLGF) form a helical membrane-spanning segment. The Cytoplasmic segment spans residues 71-83 (LGCCGAVRENKCL). The helical transmembrane segment at 84–104 (LLFFFLFILIIFLAELSAAIL) threads the bilayer. The Extracellular portion of the chain corresponds to 105-223 (AFIFRENLTR…TFETYVYLAG (119 aa)). Residues Asn-111 and Asn-129 are each glycosylated (N-linked (GlcNAc...) asparagine). Residues 224–244 (ALAIGVLAIELFAMIFAMCLF) traverse the membrane as a helical segment. The Cytoplasmic segment spans residues 245-248 (RGIQ).

This sequence belongs to the tetraspanin (TM4SF) family. Interacts with ORAI1; this interaction regulates ORAI1 exit from the endoplasmic (ER), and/or Golgi, and trafficking to the cell surface. In terms of tissue distribution, highly expressed in primary endothelial cells. Expressed in the embryo heart. Weakly expressed the embryo skeletal muscle.

Its subcellular location is the membrane. Its function is as follows. Plays a role in the cell surface localization of ORAI1 and may participate in the regulation of Ca(2+) signaling and the VWF release in response to inflammatory stimuli. The protein is Tetraspanin-18 of Homo sapiens (Human).